The chain runs to 270 residues: Centriole, cilia and spindle-associated protein (270 aa).

The residue at position 1 (Met1) is an N-acetylmethionine. The short motif at 9-15 (SEYMKRY) is the ST]-E-Y-X(3)-Y motif 1; required for efficient microtubule binding and stabilization element. 2 disordered regions span residues 50–201 (DDWG…SQKT) and 231–255 (LVAQRQRAHSVDVEKNRKMKASSSE). Residues 53 to 67 (GPAGSSEDSASSESS) show a composition bias toward low complexity. Positions 75–86 (RCAPPSPPPPVE) are enriched in pro residues. Over residues 92–101 (EAERRARGAP) the composition is skewed to basic and acidic residues. Acidic residues predominate over residues 102-118 (EEQDAEAGDAEAEDAED). Positions 127 to 144 (KDVEDKPEQQTRTRETDK) are enriched in basic and acidic residues. The span at 145–156 (SPTSTEPRQQPS) shows a compositional bias: polar residues. An ST]-E-Y-X(3)-Y motif 2; required for efficient microtubule binding and stabilization motif is present at residues 260–266 (TEYMRCY).

It belongs to the CCSAP family. As to quaternary structure, associates with microtubules; the association occurs on polyglutamylated tubulin.

The protein localises to the cytoplasm. It is found in the cytoskeleton. Its subcellular location is the microtubule organizing center. The protein resides in the centrosome. It localises to the centriole. The protein localises to the spindle. It is found in the cilium basal body. Its subcellular location is the cilium axoneme. The protein resides in the cell projection. It localises to the axon. The protein localises to the cilium. Plays a role in microtubule (MT) stabilization and this stabilization involves the maintenance of NUMA1 at the spindle poles. Colocalizes with polyglutamylated MTs to promote MT stabilization and regulate bipolar spindle formation in mitosis. Binding of CCSAP to centrosomes and the spindle around centrosomes during mitosis inhibits MT depolymerization, thereby stabilizing the mitotic spindle. May play a role in embryonic development. May be required for proper cilia beating. The protein is Centriole, cilia and spindle-associated protein (CCSAP) of Homo sapiens (Human).